The following is a 1070-amino-acid chain: Carbamoyl phosphate synthase large chain (1070 aa).

Positions 1-399 (MPKREDIKKV…SLLKAFKSLD (399 aa)) are carboxyphosphate synthetic domain. Residues Arg-129, Arg-169, Gly-175, Gly-176, Glu-208, Val-210, Glu-215, Gly-241, Val-242, His-243, Gln-284, and Glu-296 each coordinate ATP. In terms of domain architecture, ATP-grasp 1 spans 133–325 (KETMLRIGEK…IARVTAKIAI (193 aa)). The Mg(2+) site is built by Gln-284, Glu-296, and Asn-298. Residues Gln-284, Glu-296, and Asn-298 each contribute to the Mn(2+) site. An oligomerization domain region spans residues 400–540 (IDSQLGNKRW…YSTYEDTCET (141 aa)). Residues 541-931 (NPTDRKKILI…YKAELAADNL (391 aa)) form a carbamoyl phosphate synthetic domain region. Positions 672-863 (YVLMQKFGIL…LAKIAARVIA (192 aa)) constitute an ATP-grasp 2 domain. The ATP site is built by Arg-708, Asp-747, Leu-749, Glu-754, Gly-779, Val-780, His-781, Ser-782, Gln-822, and Glu-834. The Mg(2+) site is built by Gln-822, Glu-834, and Asn-836. Residues Gln-822, Glu-834, and Asn-836 each contribute to the Mn(2+) site. One can recognise an MGS-like domain in the interval 930–1070 (NLLPLTGKVF…INEYHKEMGL (141 aa)). Residues 932-1070 (LPLTGKVFLS…INEYHKEMGL (139 aa)) form an allosteric domain region.

Belongs to the CarB family. As to quaternary structure, composed of two chains; the small (or glutamine) chain promotes the hydrolysis of glutamine to ammonia, which is used by the large (or ammonia) chain to synthesize carbamoyl phosphate. Tetramer of heterodimers (alpha,beta)4. It depends on Mg(2+) as a cofactor. Mn(2+) is required as a cofactor.

The catalysed reaction is hydrogencarbonate + L-glutamine + 2 ATP + H2O = carbamoyl phosphate + L-glutamate + 2 ADP + phosphate + 2 H(+). It carries out the reaction hydrogencarbonate + NH4(+) + 2 ATP = carbamoyl phosphate + 2 ADP + phosphate + 2 H(+). It functions in the pathway amino-acid biosynthesis; L-arginine biosynthesis; carbamoyl phosphate from bicarbonate: step 1/1. Its pathway is pyrimidine metabolism; UMP biosynthesis via de novo pathway; (S)-dihydroorotate from bicarbonate: step 1/3. Large subunit of the glutamine-dependent carbamoyl phosphate synthetase (CPSase). CPSase catalyzes the formation of carbamoyl phosphate from the ammonia moiety of glutamine, carbonate, and phosphate donated by ATP, constituting the first step of 2 biosynthetic pathways, one leading to arginine and/or urea and the other to pyrimidine nucleotides. The large subunit (synthetase) binds the substrates ammonia (free or transferred from glutamine from the small subunit), hydrogencarbonate and ATP and carries out an ATP-coupled ligase reaction, activating hydrogencarbonate by forming carboxy phosphate which reacts with ammonia to form carbamoyl phosphate. In Methanosarcina acetivorans (strain ATCC 35395 / DSM 2834 / JCM 12185 / C2A), this protein is Carbamoyl phosphate synthase large chain.